The primary structure comprises 248 residues: UDP-2,3-diacylglucosamine hydrolase (248 aa).

Residues D8, H10, D41, N79, and H114 each coordinate Mn(2+). Substrate is bound at residue 79-80; sequence NR. D122, N164, R167, and H195 together coordinate substrate. The Mn(2+) site is built by H195 and H197.

Belongs to the LpxH family. Mn(2+) is required as a cofactor.

Its subcellular location is the cell inner membrane. The enzyme catalyses UDP-2-N,3-O-bis[(3R)-3-hydroxytetradecanoyl]-alpha-D-glucosamine + H2O = 2-N,3-O-bis[(3R)-3-hydroxytetradecanoyl]-alpha-D-glucosaminyl 1-phosphate + UMP + 2 H(+). It participates in glycolipid biosynthesis; lipid IV(A) biosynthesis; lipid IV(A) from (3R)-3-hydroxytetradecanoyl-[acyl-carrier-protein] and UDP-N-acetyl-alpha-D-glucosamine: step 4/6. In terms of biological role, hydrolyzes the pyrophosphate bond of UDP-2,3-diacylglucosamine to yield 2,3-diacylglucosamine 1-phosphate (lipid X) and UMP by catalyzing the attack of water at the alpha-P atom. Involved in the biosynthesis of lipid A, a phosphorylated glycolipid that anchors the lipopolysaccharide to the outer membrane of the cell. The polypeptide is UDP-2,3-diacylglucosamine hydrolase (Wigglesworthia glossinidia brevipalpis).